The chain runs to 511 residues: Maturase K (511 aa).

It belongs to the intron maturase 2 family. MatK subfamily.

Its subcellular location is the plastid. It localises to the chloroplast. Usually encoded in the trnK tRNA gene intron. Probably assists in splicing its own and other chloroplast group II introns. This Avena sativa (Oat) protein is Maturase K.